Reading from the N-terminus, the 464-residue chain is Mitogen-activated protein kinase 10 (464 aa).

Residues 64–359 (YQNLKPIGSG…VDDALQHPYI (296 aa)) form the Protein kinase domain. Residues 70-78 (IGSGAQGIV) and Lys-93 contribute to the ATP site. Asp-189 acts as the Proton acceptor in catalysis. At Thr-221 the chain carries Phosphothreonine; by MAP2K7. A TXY motif is present at residues 221-223 (TPY). Tyr-223 bears the Phosphotyrosine; by MAP2K4 mark. A disordered region spans residues 405-464 (TKNGVVKGQPSPSGAAVNSSESLPPSSSVNDISSMSTDQTLASDTDSSLEASAGPLGCCR). Low complexity predominate over residues 423-432 (SSESLPPSSS). A compositionally biased stretch (polar residues) spans 433-454 (VNDISSMSTDQTLASDTDSSLE). 2 S-palmitoyl cysteine lipidation sites follow: Cys-462 and Cys-463.

The protein belongs to the protein kinase superfamily. CMGC Ser/Thr protein kinase family. MAP kinase subfamily. As to quaternary structure, interacts with MAPKBP1. Interacts with MAPK8IP1/JIP-1 and MAPK8IP3/JIP-3/JSAP1. Interacts with SPAG9/MAPK8IP4/JIP4. Interacts with HDAC9. Interacts with ARRB2; the interaction enhances MAPK10 activation by MAP3K5. Interacts with SARM1. Interacts with JUND; interaction is inhibited in the presence of MEN1. Mg(2+) serves as cofactor. In terms of processing, dually phosphorylated on Thr-221 and Tyr-223 by MAP2K4 and MAP2K7, which activates the enzyme. MAP2K7 shows a strong preference for Thr-221 while MAP2K4 phosphorylates Tyr-223 preferentially. Weakly autophosphorylated on threonine and tyrosine residues in vitro. Palmitoylation regulates subcellular location and axonal development. Specific to a subset of neurons in the nervous system. Present in the hippocampus and areas, cerebellum, striatum, brain stem, and weakly in the spinal cord. Very weak expression in testis and kidney.

The protein resides in the cytoplasm. Its subcellular location is the membrane. It localises to the nucleus. The protein localises to the mitochondrion. It catalyses the reaction L-seryl-[protein] + ATP = O-phospho-L-seryl-[protein] + ADP + H(+). It carries out the reaction L-threonyl-[protein] + ATP = O-phospho-L-threonyl-[protein] + ADP + H(+). Its activity is regulated as follows. Activated by threonine and tyrosine phosphorylation by two dual specificity kinases, MAP2K4 and MAP2K7. MAP2K7 phosphorylates MAPK10 on Thr-221 causing a conformational change and a large increase in Vmax. MAP2K4 then phosphorylates Tyr-223 resulting in a further increase in Vmax. Inhibited by dual specificity phosphatases, such as DUSP1. Inhibited by HDAC9. In terms of biological role, serine/threonine-protein kinase involved in various processes such as neuronal proliferation, differentiation, migration and programmed cell death. Extracellular stimuli such as pro-inflammatory cytokines or physical stress stimulate the stress-activated protein kinase/c-Jun N-terminal kinase (SAP/JNK) signaling pathway. In this cascade, two dual specificity kinases MAP2K4/MKK4 and MAP2K7/MKK7 phosphorylate and activate MAPK10/JNK3. In turn, MAPK10/JNK3 phosphorylates a number of transcription factors, primarily components of AP-1 such as JUN and ATF2 and thus regulates AP-1 transcriptional activity. Plays regulatory roles in the signaling pathways during neuronal apoptosis. Phosphorylates the neuronal microtubule regulator STMN2. Acts in the regulation of the amyloid-beta precursor protein/APP signaling during neuronal differentiation by phosphorylating APP. Also participates in neurite growth in spiral ganglion neurons. Phosphorylates the CLOCK-BMAL1 heterodimer and plays a role in the photic regulation of the circadian clock. Phosphorylates JUND and this phosphorylation is inhibited in the presence of MEN1. In Homo sapiens (Human), this protein is Mitogen-activated protein kinase 10 (MAPK10).